A 147-amino-acid polypeptide reads, in one-letter code: Hemoglobin subunit beta-2 (147 aa).

The region spanning 3–147 (HWTAEEKATI…LVAALSHGYF (145 aa)) is the Globin domain. His-64 and His-93 together coordinate heme b.

This sequence belongs to the globin family. Heterotetramer of two alpha chains and two beta chains. Red blood cells.

Functionally, this is a larval (tadpole) beta-globin. The polypeptide is Hemoglobin subunit beta-2 (hbb2) (Xenopus tropicalis (Western clawed frog)).